Consider the following 160-residue polypeptide: UPF0225 protein CGSHiGG_04185 (160 aa).

The protein belongs to the UPF0225 family.

The sequence is that of UPF0225 protein CGSHiGG_04185 from Haemophilus influenzae (strain PittGG).